The following is a 306-amino-acid chain: MQPQLPPLKPIPIKDRISVLYVERGNLDVLDGAFVVVDKTGVRTHLPVGGVACLMLEPGTRVSHAAVTLASRIGCLLVWIGEAGVRLYASGQPGGARADRLLYQAKLALDDSARLKVVRKMYALRFREEPPERRSVEQLRGIEGVRVRKMYELLARQHGVAWKARNYDHTQWESGDVPNRCLSSATACLYGICEAAILAAGYAPAVGFIHTGKPQSFVYDIADIFKFETVVPVAFRIAAKKPRDPEREVRLACRDAFRQSKILHRIIPTIEQVLAAGGMDVPTPPPESVEAVIPNKEGIGDAGHRG.

Mn(2+) is bound by residues Glu-143, His-210, and Asp-223.

Belongs to the CRISPR-associated endonuclease Cas1 family. Homodimer, forms a heterotetramer with a Cas2 homodimer. Mg(2+) serves as cofactor. Requires Mn(2+) as cofactor.

Its function is as follows. CRISPR (clustered regularly interspaced short palindromic repeat), is an adaptive immune system that provides protection against mobile genetic elements (viruses, transposable elements and conjugative plasmids). CRISPR clusters contain spacers, sequences complementary to antecedent mobile elements, and target invading nucleic acids. CRISPR clusters are transcribed and processed into CRISPR RNA (crRNA). Acts as a dsDNA endonuclease. Involved in the integration of spacer DNA into the CRISPR cassette. This chain is CRISPR-associated endonuclease Cas1, found in Geobacter sulfurreducens (strain ATCC 51573 / DSM 12127 / PCA).